Consider the following 399-residue polypeptide: Serine palmitoyltransferase (399 aa).

Residues 113–114 (GF), histidine 213, threonine 241, and serine 243 each bind pyridoxal 5'-phosphate. At lysine 244 the chain carries N6-(pyridoxal phosphate)lysine.

Belongs to the class-II pyridoxal-phosphate-dependent aminotransferase family. In terms of assembly, homodimer. Pyridoxal 5'-phosphate serves as cofactor.

The protein localises to the cytoplasm. The catalysed reaction is L-serine + hexadecanoyl-CoA + H(+) = 3-oxosphinganine + CO2 + CoA. The protein operates within lipid metabolism; sphingolipid metabolism. Its function is as follows. Catalyzes the condensation of L-serine with palmitoyl-CoA (hexadecanoyl-CoA) to produce 3-oxosphinganine. The sequence is that of Serine palmitoyltransferase from Sphingobacterium spiritivorum (Flavobacterium spiritivorum).